We begin with the raw amino-acid sequence, 208 residues long: N-(5'-phosphoribosyl)anthranilate isomerase (208 aa).

This sequence belongs to the TrpF family.

It carries out the reaction N-(5-phospho-beta-D-ribosyl)anthranilate = 1-(2-carboxyphenylamino)-1-deoxy-D-ribulose 5-phosphate. The protein operates within amino-acid biosynthesis; L-tryptophan biosynthesis; L-tryptophan from chorismate: step 3/5. The chain is N-(5'-phosphoribosyl)anthranilate isomerase from Desulforamulus reducens (strain ATCC BAA-1160 / DSM 100696 / MI-1) (Desulfotomaculum reducens).